The primary structure comprises 124 residues: MENDEKEHGRRRRQHLRVPVFPEEKDEIEANAKRAGVSVARYLRDVGQGYQIKGVMDYQHVRELVRVNGDLGRLGGLLKLWLTDDVRTLQFGEATILALLGRIEATQDEMSRIMKAVVQPRAEP.

The protein localises to the cytoplasm. Functionally, this protein is essential for positively regulating the expression of transfer genes that are involved in the conjugal transfer of DNA between bacterial cells. The chain is Protein TraJ (traJ) from Escherichia coli.